The sequence spans 347 residues: GMP reductase (347 aa).

An NADP(+)-binding site is contributed by 108–131; it reads ADFEKTVQILALNPALNFVCIDVA. K(+) is bound by residues Gly181 and Gly183. The active-site Thioimidate intermediate is Cys186. 216-239 serves as a coordination point for NADP(+); that stretch reads IVSDGGCTMPGDVAKAFGGGADFV.

Belongs to the IMPDH/GMPR family. GuaC type 1 subfamily. As to quaternary structure, homotetramer.

The enzyme catalyses IMP + NH4(+) + NADP(+) = GMP + NADPH + 2 H(+). Catalyzes the irreversible NADPH-dependent deamination of GMP to IMP. It functions in the conversion of nucleobase, nucleoside and nucleotide derivatives of G to A nucleotides, and in maintaining the intracellular balance of A and G nucleotides. The sequence is that of GMP reductase from Salmonella typhi.